The chain runs to 608 residues: Protein trichome birefringence (608 aa).

Residues 38–58 (TFAYAFVITFVSFTLFFAFSP) traverse the membrane as a helical; Signal-anchor for type II membrane protein segment. Polar residues-rich tracts occupy residues 101-137 (STKPTNRSSDATDSLSVNATSPPLNSNSKNGTLQTPA) and 145-203 (AKNT…TSPA). The interval 101–236 (STKPTNRSSD…TPKKQTKTVD (136 aa)) is disordered. The span at 215–227 (TNSSSNSSTASST) shows a compositional bias: low complexity. Residues 328 to 330 (GDS) carry the GDS motif motif. Residues 573–587 (DCSHWCLPGVPDSWN) carry the DCXHWCLPGXXDXWN motif motif.

This sequence belongs to the PC-esterase family. TBL subfamily. As to expression, expressed in leaf vasculature, growing part of the root, expanding inflorescence stems and trichomes.

The protein localises to the membrane. Required during cellulose deposition. May act as a bridging protein that binds pectin and other cell wall polysaccharides. Probably involved in maintaining esterification of pectins. May be involved in the specific O-acetylation of cell wall polymers. This chain is Protein trichome birefringence (TBR), found in Arabidopsis thaliana (Mouse-ear cress).